Consider the following 171-residue polypeptide: 3-hydroxydecanoyl-[acyl-carrier-protein] dehydratase (171 aa).

His70 is a catalytic residue.

The protein belongs to the thioester dehydratase family. FabA subfamily. In terms of assembly, homodimer.

Its subcellular location is the cytoplasm. The enzyme catalyses a (3R)-hydroxyacyl-[ACP] = a (2E)-enoyl-[ACP] + H2O. The catalysed reaction is (3R)-hydroxydecanoyl-[ACP] = (2E)-decenoyl-[ACP] + H2O. It carries out the reaction (2E)-decenoyl-[ACP] = (3Z)-decenoyl-[ACP]. Its pathway is lipid metabolism; fatty acid biosynthesis. Necessary for the introduction of cis unsaturation into fatty acids. Catalyzes the dehydration of (3R)-3-hydroxydecanoyl-ACP to E-(2)-decenoyl-ACP and then its isomerization to Z-(3)-decenoyl-ACP. Can catalyze the dehydratase reaction for beta-hydroxyacyl-ACPs with saturated chain lengths up to 16:0, being most active on intermediate chain length. This is 3-hydroxydecanoyl-[acyl-carrier-protein] dehydratase from Vibrio campbellii (strain ATCC BAA-1116).